The following is a 171-amino-acid chain: Ribosome maturation factor RimM (171 aa).

The PRC barrel domain maps to 97–169; it reads DGEFYYHEII…RVDVSIMEGL (73 aa).

Belongs to the RimM family. Binds ribosomal protein uS19.

Its subcellular location is the cytoplasm. Its function is as follows. An accessory protein needed during the final step in the assembly of 30S ribosomal subunit, possibly for assembly of the head region. Essential for efficient processing of 16S rRNA. May be needed both before and after RbfA during the maturation of 16S rRNA. It has affinity for free ribosomal 30S subunits but not for 70S ribosomes. The chain is Ribosome maturation factor RimM from Lactococcus lactis subsp. lactis (strain IL1403) (Streptococcus lactis).